The sequence spans 618 residues: UvrABC system protein C (618 aa).

In terms of domain architecture, GIY-YIG spans 13–92; that stretch reads DKPGVYLMKN…IKKYRPKYNI (80 aa). In terms of domain architecture, UVR spans 204-239; it reads LDIVENFKLNMERAAENLEFEKAAMLRDKINIIEKI.

This sequence belongs to the UvrC family. In terms of assembly, interacts with UvrB in an incision complex.

The protein localises to the cytoplasm. In terms of biological role, the UvrABC repair system catalyzes the recognition and processing of DNA lesions. UvrC both incises the 5' and 3' sides of the lesion. The N-terminal half is responsible for the 3' incision and the C-terminal half is responsible for the 5' incision. This chain is UvrABC system protein C, found in Clostridium botulinum (strain Langeland / NCTC 10281 / Type F).